The following is a 102-amino-acid chain: Protamine-2 (102 aa).

Residues Ser-8, Ser-10, and Ser-37 each carry the phosphoserine modification. A disordered region spans residues 16-102 (VYGQQLRGQE…RTRRRRCRRH (87 aa)). Basic residues predominate over residues 49-102 (GHSHYRRRHCSRRRLHRIHRQQHRSCGRRRRRSCRQRRRHRRGCRTRRRRCRRH).

Belongs to the protamine P2 family. In terms of assembly, interacts with TDRP. In terms of processing, proteolytic processing into mature chains is required for histone eviction during spermatogenesis. Transition proteins (TNP1 and TNP2) are required for processing. Testis.

Its subcellular location is the nucleus. It localises to the chromosome. Its function is as follows. Protamines substitute for histones in the chromatin of sperm during the haploid phase of spermatogenesis. They compact sperm DNA into a highly condensed, stable and inactive complex. This chain is Protamine-2 (PRM2), found in Hylobates lar (Lar gibbon).